A 436-amino-acid chain; its full sequence is UDP-N-acetylmuramate--L-alanine ligase (436 aa).

111 to 117 (GTHGKTS) is a binding site for ATP.

The protein belongs to the MurCDEF family.

It is found in the cytoplasm. The catalysed reaction is UDP-N-acetyl-alpha-D-muramate + L-alanine + ATP = UDP-N-acetyl-alpha-D-muramoyl-L-alanine + ADP + phosphate + H(+). Its pathway is cell wall biogenesis; peptidoglycan biosynthesis. In terms of biological role, cell wall formation. In Lactiplantibacillus plantarum (strain ATCC BAA-793 / NCIMB 8826 / WCFS1) (Lactobacillus plantarum), this protein is UDP-N-acetylmuramate--L-alanine ligase.